We begin with the raw amino-acid sequence, 312 residues long: E3 ubiquitin-protein ligase RNF126-B (312 aa).

Zn(2+) is bound by residues Cys13, Cys16, Cys29, and Cys32. The C4-type zinc finger occupies 13 to 32 (CHSCTAEITPRLPEYTCPRC). Disordered regions lie at residues 41–63 (PETSRNSESNSSNNSGTDQNRPS) and 96–139 (GTSG…RNEG). Residues 44-55 (SRNSESNSSNNS) show a composition bias toward low complexity. Residues 102–115 (EETRDGESRREHQS) are compositionally biased toward basic and acidic residues. Residues 124-134 (PRARMSTRRGA) show a composition bias toward basic residues. An RING-type zinc finger spans residues 228-269 (CPVCKEDYTVGESVRQLPCNHLFHNDCIIPWLEQHDTCPVCR). The tract at residues 275 to 312 (QNTATNPPGLTDMTFSSSSTSSSSSTSPTDENNTANNS) is disordered. Residues 290 to 301 (SSSSTSSSSSTS) are compositionally biased toward low complexity. A compositionally biased stretch (polar residues) spans 302 to 312 (PTDENNTANNS).

The protein localises to the cytoplasm. It is found in the nucleus. It catalyses the reaction S-ubiquitinyl-[E2 ubiquitin-conjugating enzyme]-L-cysteine + [acceptor protein]-L-lysine = [E2 ubiquitin-conjugating enzyme]-L-cysteine + N(6)-ubiquitinyl-[acceptor protein]-L-lysine.. It participates in protein modification; protein ubiquitination. In terms of biological role, E3 ubiquitin-protein ligase that mediates ubiquitination oF target proteins. Depending on the associated E2 ligase, mediates 'Lys-27'-, 'Lys-29'-, 'Lys-48'- and/or 'Lys-63'-linked polyubiquitination of substrates. Part of a BAG6-dependent quality control process ensuring that proteins of the secretory pathway that are mislocalized to the cytosol are degraded by the proteasome. Probably acts by providing the ubiquitin ligase activity associated with the BAG6 complex and be responsible for ubiquitination of the hydrophobic mislocalized proteins and their targeting to the proteasome. The polypeptide is E3 ubiquitin-protein ligase RNF126-B (Xenopus laevis (African clawed frog)).